Reading from the N-terminus, the 222-residue chain is MATIEVKDREGAAKGSVELPDEIFAQKVNIPLIHQVVVAQQAAGRQGTHSTKTRGEVRGGGKKPYRQKGTGRARQGSVRAPQFTGGGTVHGPKPRDYAQRTPKKMKAAALRGALSNRAQHGRIHVVSEFVPEDVTTKRTQTALKTLRKITDSDKVLVVLSREDQHNRLALRNLPEVHILDANQVNTYDVLYADDIVFTEAGYQEFLAHAKGSKIAASQEDDQ.

Residues 42–100 (AAGRQGTHSTKTRGEVRGGGKKPYRQKGTGRARQGSVRAPQFTGGGTVHGPKPRDYAQR) are disordered. Residues 60 to 71 (GGKKPYRQKGTG) show a composition bias toward basic residues.

Belongs to the universal ribosomal protein uL4 family. Part of the 50S ribosomal subunit.

In terms of biological role, one of the primary rRNA binding proteins, this protein initially binds near the 5'-end of the 23S rRNA. It is important during the early stages of 50S assembly. It makes multiple contacts with different domains of the 23S rRNA in the assembled 50S subunit and ribosome. Forms part of the polypeptide exit tunnel. The chain is Large ribosomal subunit protein uL4 from Thermobifida fusca (strain YX).